The sequence spans 116 residues: Holo-[acyl-carrier-protein] synthase (116 aa).

Positions 5 and 50 each coordinate Mg(2+).

It belongs to the P-Pant transferase superfamily. AcpS family. Mg(2+) is required as a cofactor.

Its subcellular location is the cytoplasm. The catalysed reaction is apo-[ACP] + CoA = holo-[ACP] + adenosine 3',5'-bisphosphate + H(+). Its function is as follows. Transfers the 4'-phosphopantetheine moiety from coenzyme A to a Ser of acyl-carrier-protein. This chain is Holo-[acyl-carrier-protein] synthase, found in Campylobacter lari (strain RM2100 / D67 / ATCC BAA-1060).